We begin with the raw amino-acid sequence, 1002 residues long: ATP-dependent DNA helicase MPH1 (1002 aa).

Residues 108–275 (IVRCALFENV…EVVNNLHISK (168 aa)) enclose the Helicase ATP-binding domain. 121–128 (IPTGTGKT) is an ATP binding site. Residues 223–226 (DEAH) carry the DEAH box motif. Residues 506–669 (DEETYIRKNK…ALEYTKSDRI (164 aa)) form the Helicase C-terminal domain. Residues 531–551 (ENRVEEEKKRQKEQAKLERTG) are compositionally biased toward basic and acidic residues. Disordered stretches follow at residues 531–569 (ENRV…NQKQ) and 799–843 (AKSQ…DSHT). The span at 553-568 (RTGSSEEAQLSGMNQK) shows a compositional bias: polar residues.

Belongs to the DEAD box helicase family. DEAH subfamily. FANCM sub-subfamily. Interacts with the MHF histone-fold complex to form the FANCM-MHF complex.

The protein resides in the nucleus. It carries out the reaction ATP + H2O = ADP + phosphate + H(+). ATP-dependent DNA helicase involved in DNA damage repair by homologous recombination and in genome maintenance. Capable of unwinding D-loops. Plays a role in limiting crossover recombinants during mitotic DNA double-strand break (DSB) repair. Component of a FANCM-MHF complex which promotes gene conversion at blocked replication forks, probably by reversal of the stalled fork. This is ATP-dependent DNA helicase MPH1 from Kluyveromyces lactis (strain ATCC 8585 / CBS 2359 / DSM 70799 / NBRC 1267 / NRRL Y-1140 / WM37) (Yeast).